A 351-amino-acid chain; its full sequence is MNDKRKPSFQSAGKTFQERSVGEKYREKPTQNRPHFNDKFNGNRNEKSRFPRDKQEVKETRITQLSLSRAPSNKNAEQPKVQVTIKSTGTVYKTKEKKTGALSPRAPEKIKKNRAEEMKVYGENACLALFAERPESIVRLWATVQMSHKIGEVLSYLAENKKAYHVVDSEELARVSGTEHHGGICLLVKKPRAFTLQGYLDIPRNEDCLVLLDNVNNAQNIGGVLRTCAYFGVKNIVADNVENLYSAASMRVAEGGAEYIRVLEADYIDSALMQLRKSGYQIIHVSHNKQGDPLDKVRLKNKVVFVLSESSTESLATPEDTQARLTLASPIKSGLNIAVNAGVLLAKWYFR.

The segment at 1–61 (MNDKRKPSFQ…RDKQEVKETR (61 aa)) is disordered. Composition is skewed to basic and acidic residues over residues 16–38 (FQER…HFND) and 44–61 (RNEK…KETR).

This sequence belongs to the class IV-like SAM-binding methyltransferase superfamily. RNA methyltransferase TrmH family.

This is an uncharacterized protein from Haemophilus influenzae (strain ATCC 51907 / DSM 11121 / KW20 / Rd).